The chain runs to 317 residues: MSSLSSGPQDTGGSSSSSSNGSSGSGPKAGVADKSAAVAAAAPASVADDAPPPERRNKSGIISEPLNKSLRRSRPLSHYSSFGGSGGSGGGSMMGGESAEKAAAAAASLLANGHDLAAAMAVDKSNSTSKHKSSAVASLLSKAERATELGAEGQLTLQQFAQSTEMLKRVVQEHLPLMSEAGAGLPDMEAVAGAEALNGQSDFPYLGAFPINPGLFIMTPAGVFLAESALHMAGLAEYPMQGELASAISSGKKKRKRCGMCAPCRRRINCEQCSSCRNRKTGHQICKFRKCEELKKKPSAALEKVMLPTGAAFRWFQ.

Over residues 1–49 the composition is skewed to low complexity; sequence MSSLSSGPQDTGGSSSSSSNGSSGSGPKAGVADKSAAVAAAAPASVADD. The segment at 1 to 96 is disordered; the sequence is MSSLSSGPQD…GSGGGSMMGG (96 aa). Over residues 83-94 the composition is skewed to gly residues; the sequence is GGSGGSGGGSMM. Residues 251–292 form a CXXC-type zinc finger; that stretch reads GKKKRKRCGMCAPCRRRINCEQCSSCRNRKTGHQICKFRKCE. Residues 252–257 carry the Nuclear localization signal motif; that stretch reads KKKRKR. C258, C261, C264, C270, C273, C276, C286, and C291 together coordinate Zn(2+).

As to quaternary structure, interacts with DVL1. Interacts with RBPJ.

It is found in the nucleus. The protein localises to the cytoplasm. May indirectly participate in activation of the NF-kappa-B and MAPK pathways. Acts as a mediator of BMP4-mediated modulation of canonical Wnt signaling activity in neural stem cells. Required for DNA damage-induced ATM phosphorylation, p53 activation and cell cycle arrest. Involved in myelopoiesis. Binds to the oxygen responsive element of COX4I2 and represses its transcription under hypoxia conditions (4% oxygen), as well as normoxia conditions (20% oxygen). May repress COX4I2 transactivation induced by CHCHD2 and RBPJ. Binds preferentially to DNA containing cytidine-phosphate-guanosine (CpG) dinucleotides over CpH (H=A, T, and C), hemimethylated-CpG and hemimethylated-hydroxymethyl-CpG. The polypeptide is CXXC-type zinc finger protein 5 (CXXC5) (Bos taurus (Bovine)).